Here is a 294-residue protein sequence, read N- to C-terminus: Undecaprenyl-diphosphatase (294 aa).

Helical transmembrane passes span 39–59 (PGAA…ILYF), 93–113 (ATLG…GFTL), 123–143 (NLWI…MVDA), 198–218 (SFLM…IKAV), 232–252 (PTLV…IGFL), and 268–288 (IGLA…AIDP).

This sequence belongs to the UppP family.

The protein resides in the cell membrane. The catalysed reaction is di-trans,octa-cis-undecaprenyl diphosphate + H2O = di-trans,octa-cis-undecaprenyl phosphate + phosphate + H(+). Functionally, catalyzes the dephosphorylation of undecaprenyl diphosphate (UPP). Confers resistance to bacitracin. This is Undecaprenyl-diphosphatase from Bifidobacterium longum (strain DJO10A).